A 264-amino-acid chain; its full sequence is Thymidylate synthase (264 aa).

Residue arginine 21 coordinates dUMP. Histidine 51 serves as a coordination point for (6R)-5,10-methylene-5,6,7,8-tetrahydrofolate. 126-127 is a binding site for dUMP; that stretch reads RR. Cysteine 146 (nucleophile) is an active-site residue. DUMP-binding positions include 166 to 169, asparagine 177, and 207 to 209; these read RSCD and HLY. A (6R)-5,10-methylene-5,6,7,8-tetrahydrofolate-binding site is contributed by aspartate 169. Alanine 263 lines the (6R)-5,10-methylene-5,6,7,8-tetrahydrofolate pocket.

This sequence belongs to the thymidylate synthase family. Bacterial-type ThyA subfamily. Homodimer.

It localises to the cytoplasm. The catalysed reaction is dUMP + (6R)-5,10-methylene-5,6,7,8-tetrahydrofolate = 7,8-dihydrofolate + dTMP. It participates in pyrimidine metabolism; dTTP biosynthesis. In terms of biological role, catalyzes the reductive methylation of 2'-deoxyuridine-5'-monophosphate (dUMP) to 2'-deoxythymidine-5'-monophosphate (dTMP) while utilizing 5,10-methylenetetrahydrofolate (mTHF) as the methyl donor and reductant in the reaction, yielding dihydrofolate (DHF) as a by-product. This enzymatic reaction provides an intracellular de novo source of dTMP, an essential precursor for DNA biosynthesis. The polypeptide is Thymidylate synthase (Aeromonas salmonicida (strain A449)).